Here is a 106-residue protein sequence, read N- to C-terminus: MKAKRSHQAVIMSTSLRVSPSIHGYHFDTASRKKAVGNIFENTDQESLERLFRNSGDKKAEERAKIIFAIDQDVEEKTRALMALKKRTKDKLFQFLKLRKYSIKVH.

In terms of assembly, monomer. Interacts with NOTCH2 (via ANK repeats), the interaction inhibits the nuclear translocation of NOTCH2 N2ICD. Interacts (C-terminus) with CBY1 (C-terminus), TCIM competes with CTNNB1 for the interaction with CBY1. As to expression, ubiquitous. Expressed in thyroid papillary carcinoma. Expressed in liver, expression levels decrease in hepatocellular carcinoma. Slightly detected in normal lung, its expression is highly induced in lung cancer cells (at protein level).

Its subcellular location is the cytoplasm. The protein localises to the nucleus. It localises to the nucleolus. The protein resides in the nucleus speckle. Seems to be involved in the regulation of cell growth an differentiation, may play different and opposite roles depending on the tissue or cell type. May enhance the WNT-CTNNB1 pathway by relieving antagonistic activity of CBY1. Enhances the proliferation of follicular dendritic cells. Plays a role in the mitogen-activated MAPK2/3 signaling pathway, positively regulates G1-to-S-phase transition of the cell cycle. In endothelial cells, enhances key inflammatory mediators and inflammatory response through the modulation of NF-kappaB transcriptional regulatory activity. Involved in the regulation of heat shock response, seems to play a positive feedback with HSF1 to modulate heat-shock downstream gene expression. Plays a role in the regulation of hematopoiesis even if the mechanisms are unknown. In cancers such as thyroid or lung cancer, it has been described as promoter of cell proliferation, G1-to-S-phase transition and inhibitor of apoptosis. However, it negatively regulates self-renewal of liver cancer cells via suppresion of NOTCH2 signaling. This chain is Transcriptional and immune response regulator, found in Homo sapiens (Human).